Here is a 187-residue protein sequence, read N- to C-terminus: Biogenesis of lysosome-related organelles complex 1 subunit 5 (187 aa).

The tract at residues 1–27 (MSGGGTETPVACEAAQGGGGKKRDSLG) is disordered. Residue Ser-2 is modified to N-acetylserine.

It belongs to the BLOC1S5 family. Octamer composed of one copy each BLOC1S1, BLOC1S2, BLOC1S3, BLOC1S4, BLOC1S5, BLOC1S6, DTNBP1/BLOC1S7 and SNAPIN/BLOC1S8. The BLOC-1 complex associates with the AP-3 protein complex and membrane protein cargos. Interacts with BLOC1S4, BLOC1S6, DTNBP1/BLOC1S7 and PI4K2A. Component of the biogenesis of lysosome-related organelles complex 1 (BLOC-1) composed of BLOC1S1, BLOC1S2, BLOC1S3, BLOC1S4, BLOC1S5, BLOC1S6, DTNBP1/BLOC1S7 and SNAPIN/BLOC1S8.

Its function is as follows. Component of the BLOC-1 complex, a complex that is required for normal biogenesis of lysosome-related organelles (LRO), such as platelet dense granules and melanosomes. In concert with the AP-3 complex, the BLOC-1 complex is required to target membrane protein cargos into vesicles assembled at cell bodies for delivery into neurites and nerve terminals. The BLOC-1 complex, in association with SNARE proteins, is also proposed to be involved in neurite extension. Plays a role in intracellular vesicle trafficking. This Rattus norvegicus (Rat) protein is Biogenesis of lysosome-related organelles complex 1 subunit 5 (Bloc1s5).